The sequence spans 438 residues: Aspartate--tRNA(Asp/Asn) ligase (438 aa).

Glutamate 176 is an L-aspartate binding site. Residues 198–201 are aspartate; sequence QLYK. Arginine 220 serves as a coordination point for L-aspartate. ATP is bound by residues 220-222, 228-230, and glutamate 361; these read RAE and RHL. Mg(2+) is bound by residues glutamate 361 and serine 364. Serine 364 and arginine 368 together coordinate L-aspartate. 409-412 serves as a coordination point for ATP; it reads GADR.

This sequence belongs to the class-II aminoacyl-tRNA synthetase family. Type 2 subfamily. As to quaternary structure, homodimer. The cofactor is Mg(2+).

It localises to the cytoplasm. It carries out the reaction tRNA(Asx) + L-aspartate + ATP = L-aspartyl-tRNA(Asx) + AMP + diphosphate. Its function is as follows. Aspartyl-tRNA synthetase with relaxed tRNA specificity since it is able to aspartylate not only its cognate tRNA(Asp) but also tRNA(Asn). Reaction proceeds in two steps: L-aspartate is first activated by ATP to form Asp-AMP and then transferred to the acceptor end of tRNA(Asp/Asn). The chain is Aspartate--tRNA(Asp/Asn) ligase from Methanocaldococcus jannaschii (strain ATCC 43067 / DSM 2661 / JAL-1 / JCM 10045 / NBRC 100440) (Methanococcus jannaschii).